Here is a 419-residue protein sequence, read N- to C-terminus: Ribosome biogenesis protein WDR12 homolog (419 aa).

The tract at residues 10–91 is ubiquitin-like (UBL) domain; that stretch reads VQVHLKTKQE…EDAIEIEYVE (82 aa). WD repeat units follow at residues 103–141, 142–184, 191–230, 249–287, 289–328, 334–374, and 378–416; these read LHDDWVSAVKASGKWILTGCYDNTLNIWTNKGKHILTIP, GHTA…NTVE, GHERGVDSVSVSPDGQRFATGSWDTMLKVWSAELEDAGEG, GHRESISAVQWMDASTLLTGSWDHTLKVWDLSLEGIKAE, STNKSIFDASYSKLNHLILTASADKNLRLYDSRTNQGSVV, GHNA…APLY, and GHGEKVLDIDWTNPKYIVSGGSDNTVRVFKSRKALVENM.

This sequence belongs to the WD repeat WDR12/YTM1 family.

It is found in the nucleus. Its subcellular location is the nucleolus. The protein localises to the nucleoplasm. Its function is as follows. Required for maturation of ribosomal RNAs and formation of the large ribosomal subunit. The chain is Ribosome biogenesis protein WDR12 homolog from Drosophila persimilis (Fruit fly).